The sequence spans 343 residues: Small ribosomal subunit biogenesis GTPase RsgA (343 aa).

The CP-type G domain maps to 116 to 275; sequence RGQLKPVAAN…LIDSPGIREF (160 aa). GTP-binding positions include 163–166 and 217–225; these read NKFD and GQSGVGKSS. Positions 299, 304, 306, and 312 each coordinate Zn(2+).

The protein belongs to the TRAFAC class YlqF/YawG GTPase family. RsgA subfamily. Monomer. Associates with 30S ribosomal subunit, binds 16S rRNA. Requires Zn(2+) as cofactor.

The protein localises to the cytoplasm. Functionally, one of several proteins that assist in the late maturation steps of the functional core of the 30S ribosomal subunit. Helps release RbfA from mature subunits. May play a role in the assembly of ribosomal proteins into the subunit. Circularly permuted GTPase that catalyzes slow GTP hydrolysis, GTPase activity is stimulated by the 30S ribosomal subunit. This is Small ribosomal subunit biogenesis GTPase RsgA from Pseudomonas fluorescens (strain SBW25).